An 83-amino-acid chain; its full sequence is MDTSLKNNDGASEADNKNYQDYKDESGNINDVINAIKHNSMVDCCHKNYSTFSSEWYMNERKYDDIAEGPSPKKSVVHRCTII.

The segment covering 1–10 (MDTSLKNNDG) has biased composition (polar residues). The interval 1–25 (MDTSLKNNDGASEADNKNYQDYKDE) is disordered. A compositionally biased stretch (basic and acidic residues) spans 14–25 (ADNKNYQDYKDE).

This sequence belongs to the asfivirus L83L family. In terms of assembly, interacts with host IL1B.

The protein resides in the host cytoplasm. Functionally, may subvert the host innate immune response by interacting with host IL1B and interfering with its function. This chain is Protein L83L, found in Ornithodoros (relapsing fever ticks).